A 217-amino-acid polypeptide reads, in one-letter code: MITRAELLDMLASNAPQGFEAQALGLVPIVVETSGRGERSYDIYSRLLKERLVFMVGEVNDQTANLVVAQLLFLESENPDKDISLYINSPGGSVSAGMAIYDTMQFIKPDVSTLCMGLAASMGAFLLASGAKGKRFALPNSRVMIHQPLGGARGQASDIEIQAREILYLKERLNNLLAQHTGQDVERIARDTDRDNFMSSDDAKAYGLIDQVLLKRP.

Ser-121 functions as the Nucleophile in the catalytic mechanism. His-146 is a catalytic residue.

This sequence belongs to the peptidase S14 family. Fourteen ClpP subunits assemble into 2 heptameric rings which stack back to back to give a disk-like structure with a central cavity, resembling the structure of eukaryotic proteasomes.

Its subcellular location is the cytoplasm. The catalysed reaction is Hydrolysis of proteins to small peptides in the presence of ATP and magnesium. alpha-casein is the usual test substrate. In the absence of ATP, only oligopeptides shorter than five residues are hydrolyzed (such as succinyl-Leu-Tyr-|-NHMec, and Leu-Tyr-Leu-|-Tyr-Trp, in which cleavage of the -Tyr-|-Leu- and -Tyr-|-Trp bonds also occurs).. Functionally, cleaves peptides in various proteins in a process that requires ATP hydrolysis. Has a chymotrypsin-like activity. Plays a major role in the degradation of misfolded proteins. The polypeptide is ATP-dependent Clp protease proteolytic subunit (Burkholderia vietnamiensis (strain G4 / LMG 22486) (Burkholderia cepacia (strain R1808))).